The primary structure comprises 217 residues: Small ribosomal subunit protein uS5 (217 aa).

The S5 DRBM domain occupies 49–112 (LEEKVLDVKL…AQAKKNIIRV (64 aa)).

It belongs to the universal ribosomal protein uS5 family. As to quaternary structure, part of the 30S ribosomal subunit. Contacts protein S4.

In terms of biological role, with S4 and S12 plays an important role in translational accuracy. The sequence is that of Small ribosomal subunit protein uS5 from Methanocaldococcus jannaschii (strain ATCC 43067 / DSM 2661 / JAL-1 / JCM 10045 / NBRC 100440) (Methanococcus jannaschii).